We begin with the raw amino-acid sequence, 228 residues long: Orotate phosphoribosyltransferase (228 aa).

Residues R107, K108, K111, and 133 to 141 each bind 5-phospho-alpha-D-ribose 1-diphosphate; that span reads EDLTTDGGS. T137 contacts orotate.

It belongs to the purine/pyrimidine phosphoribosyltransferase family. PyrE subfamily. In terms of assembly, homodimer. Requires Mg(2+) as cofactor.

The enzyme catalyses orotidine 5'-phosphate + diphosphate = orotate + 5-phospho-alpha-D-ribose 1-diphosphate. The protein operates within pyrimidine metabolism; UMP biosynthesis via de novo pathway; UMP from orotate: step 1/2. Catalyzes the transfer of a ribosyl phosphate group from 5-phosphoribose 1-diphosphate to orotate, leading to the formation of orotidine monophosphate (OMP). In Jannaschia sp. (strain CCS1), this protein is Orotate phosphoribosyltransferase.